The following is a 126-amino-acid chain: Arginine decarboxylase proenzyme (126 aa).

Ser74 (schiff-base intermediate with substrate; via pyruvic acid) is an active-site residue. Position 74 is a pyruvic acid (Ser); by autocatalysis (Ser74). His79 (proton acceptor; for processing activity) is an active-site residue. Cys94 (proton donor; for catalytic activity) is an active-site residue.

The protein belongs to the prokaryotic AdoMetDC family. Type 1 subfamily. In terms of assembly, heterooctamer of four alpha and four beta chains arranged as a tetramer of alpha/beta heterodimers. Requires pyruvate as cofactor. Post-translationally, is synthesized initially as an inactive proenzyme. Formation of the active enzyme involves a self-maturation process in which the active site pyruvoyl group is generated from an internal serine residue via an autocatalytic post-translational modification. Two non-identical subunits are generated from the proenzyme in this reaction, and the pyruvate is formed at the N-terminus of the alpha chain, which is derived from the carboxyl end of the proenzyme. The post-translation cleavage follows an unusual pathway, termed non-hydrolytic serinolysis, in which the side chain hydroxyl group of the serine supplies its oxygen atom to form the C-terminus of the beta chain, while the remainder of the serine residue undergoes an oxidative deamination to produce ammonia and the pyruvoyl group blocking the N-terminus of the alpha chain.

The catalysed reaction is L-arginine + H(+) = agmatine + CO2. Its pathway is amine and polyamine biosynthesis; agmatine biosynthesis; agmatine from L-arginine: step 1/1. Specifically catalyzes the decarboxylation of L-arginine to agmatine. Has no S-adenosylmethionine decarboxylase (AdoMetDC) activity. The polypeptide is Arginine decarboxylase proenzyme (Pyrobaculum neutrophilum (strain DSM 2338 / JCM 9278 / NBRC 100436 / V24Sta) (Thermoproteus neutrophilus)).